Reading from the N-terminus, the 215-residue chain is Thiamine-phosphate synthase (215 aa).

Residues 43–47 (QLRDK) and N75 contribute to the 4-amino-2-methyl-5-(diphosphooxymethyl)pyrimidine site. Residues D76 and D95 each contribute to the Mg(2+) site. Residue S114 participates in 4-amino-2-methyl-5-(diphosphooxymethyl)pyrimidine binding. 141–143 (TPT) contributes to the 2-[(2R,5Z)-2-carboxy-4-methylthiazol-5(2H)-ylidene]ethyl phosphate binding site. K144 is a binding site for 4-amino-2-methyl-5-(diphosphooxymethyl)pyrimidine. G172 serves as a coordination point for 2-[(2R,5Z)-2-carboxy-4-methylthiazol-5(2H)-ylidene]ethyl phosphate.

Belongs to the thiamine-phosphate synthase family. The cofactor is Mg(2+).

It catalyses the reaction 2-[(2R,5Z)-2-carboxy-4-methylthiazol-5(2H)-ylidene]ethyl phosphate + 4-amino-2-methyl-5-(diphosphooxymethyl)pyrimidine + 2 H(+) = thiamine phosphate + CO2 + diphosphate. The catalysed reaction is 2-(2-carboxy-4-methylthiazol-5-yl)ethyl phosphate + 4-amino-2-methyl-5-(diphosphooxymethyl)pyrimidine + 2 H(+) = thiamine phosphate + CO2 + diphosphate. It carries out the reaction 4-methyl-5-(2-phosphooxyethyl)-thiazole + 4-amino-2-methyl-5-(diphosphooxymethyl)pyrimidine + H(+) = thiamine phosphate + diphosphate. The protein operates within cofactor biosynthesis; thiamine diphosphate biosynthesis; thiamine phosphate from 4-amino-2-methyl-5-diphosphomethylpyrimidine and 4-methyl-5-(2-phosphoethyl)-thiazole: step 1/1. In terms of biological role, condenses 4-methyl-5-(beta-hydroxyethyl)thiazole monophosphate (THZ-P) and 2-methyl-4-amino-5-hydroxymethyl pyrimidine pyrophosphate (HMP-PP) to form thiamine monophosphate (TMP). The polypeptide is Thiamine-phosphate synthase (Streptomyces avermitilis (strain ATCC 31267 / DSM 46492 / JCM 5070 / NBRC 14893 / NCIMB 12804 / NRRL 8165 / MA-4680)).